The primary structure comprises 348 residues: Sulfate/thiosulfate import ATP-binding protein CysA (348 aa).

Residues 3 to 237 form the ABC transporter domain; that stretch reads IRIQELRKQF…PSSPFVYSFV (235 aa). ATP is bound at residue 35-42; it reads GPSGSGKT.

Belongs to the ABC transporter superfamily. Sulfate/tungstate importer (TC 3.A.1.6) family. In terms of assembly, the complex is composed of two ATP-binding proteins (CysA), two transmembrane proteins (CysT and CysW) and a solute-binding protein (CysP).

Its subcellular location is the cell inner membrane. The catalysed reaction is sulfate(out) + ATP + H2O = sulfate(in) + ADP + phosphate + H(+). The enzyme catalyses thiosulfate(out) + ATP + H2O = thiosulfate(in) + ADP + phosphate + H(+). In terms of biological role, part of the ABC transporter complex CysAWTP involved in sulfate/thiosulfate import. Responsible for energy coupling to the transport system. This is Sulfate/thiosulfate import ATP-binding protein CysA from Xylella fastidiosa (strain Temecula1 / ATCC 700964).